The primary structure comprises 176 residues: NAD(P)H-quinone oxidoreductase subunit 6, chloroplastic (176 aa).

The next 5 membrane-spanning stretches (helical) occupy residues 10–30 (ILLV…VLLT), 32–52 (PIYS…FHIP), 61–81 (AQLL…VMFM), 92–112 (LWTV…FSLI), and 152–172 (FYLP…GAIS).

It belongs to the complex I subunit 6 family. In terms of assembly, NDH is composed of at least 16 different subunits, 5 of which are encoded in the nucleus.

It localises to the plastid. Its subcellular location is the chloroplast thylakoid membrane. It catalyses the reaction a plastoquinone + NADH + (n+1) H(+)(in) = a plastoquinol + NAD(+) + n H(+)(out). The catalysed reaction is a plastoquinone + NADPH + (n+1) H(+)(in) = a plastoquinol + NADP(+) + n H(+)(out). Functionally, NDH shuttles electrons from NAD(P)H:plastoquinone, via FMN and iron-sulfur (Fe-S) centers, to quinones in the photosynthetic chain and possibly in a chloroplast respiratory chain. The immediate electron acceptor for the enzyme in this species is believed to be plastoquinone. Couples the redox reaction to proton translocation, and thus conserves the redox energy in a proton gradient. This chain is NAD(P)H-quinone oxidoreductase subunit 6, chloroplastic (ndhG), found in Liriodendron tulipifera (Tuliptree).